A 423-amino-acid chain; its full sequence is ATP-citrate synthase alpha chain protein 1 (423 aa).

Citrate is bound by residues N343, T345, and R376.

Belongs to the succinate/malate CoA ligase beta subunit family. In terms of assembly, heterooctamer of 4 alpha and 4 beta chains. Expressed in trichomes, epidermal leaf cells, anther tapetal cells, stigma and in young vascular bundles of expanding leaves, cotyledons, roots, pedicel of flowers and siliques.

Its subcellular location is the cytoplasm. It is found in the cytosol. It catalyses the reaction oxaloacetate + acetyl-CoA + ADP + phosphate = citrate + ATP + CoA. In terms of biological role, ATP citrate-lyase is the primary enzyme responsible for the synthesis of cytosolic acetyl-CoA, used for the elongation of fatty acids and biosynthesis of isoprenoids, flavonoids and malonated derivatives. May supply substrate to the cytosolic acetyl-CoA carboxylase, which generates the malonyl-CoA used for the synthesis of a multitude of compounds, including very long chain fatty acids and flavonoids. Required for normal growth and development and elongation of C18 fatty acids to C20 to C24 fatty acids in seeds. In contrast to all known animal ACL enzymes having a homomeric structure, plant ACLs are composed of alpha and beta chains. This chain is ATP-citrate synthase alpha chain protein 1 (ACLA-1), found in Arabidopsis thaliana (Mouse-ear cress).